Consider the following 188-residue polypeptide: Elongation factor P-like protein (188 aa).

The protein belongs to the elongation factor P family.

The polypeptide is Elongation factor P-like protein (Vibrio campbellii (strain ATCC BAA-1116)).